A 175-amino-acid chain; its full sequence is NADH-ubiquinone oxidoreductase chain 6 (175 aa).

A run of 5 helical transmembrane segments spans residues 1–21 (MMTY…VGFS), 25–45 (SPIY…GIVL), 47–67 (FGGS…MLVV), 88–108 (AVLG…CYIL), and 149–169 (YGTW…LVIM).

The protein belongs to the complex I subunit 6 family. As to quaternary structure, core subunit of respiratory chain NADH dehydrogenase (Complex I) which is composed of 45 different subunits.

It localises to the mitochondrion inner membrane. It carries out the reaction a ubiquinone + NADH + 5 H(+)(in) = a ubiquinol + NAD(+) + 4 H(+)(out). Core subunit of the mitochondrial membrane respiratory chain NADH dehydrogenase (Complex I) which catalyzes electron transfer from NADH through the respiratory chain, using ubiquinone as an electron acceptor. Essential for the catalytic activity and assembly of complex I. The polypeptide is NADH-ubiquinone oxidoreductase chain 6 (MT-ND6) (Halichoerus grypus (Gray seal)).